The sequence spans 193 residues: Acyl carrier protein phosphodiesterase (193 aa).

Belongs to the AcpH family.

It carries out the reaction holo-[ACP] + H2O = apo-[ACP] + (R)-4'-phosphopantetheine + H(+). Its function is as follows. Converts holo-ACP to apo-ACP by hydrolytic cleavage of the phosphopantetheine prosthetic group from ACP. This Serratia proteamaculans (strain 568) protein is Acyl carrier protein phosphodiesterase.